The sequence spans 252 residues: Gastrula zinc finger protein XlCGF28.1 (252 aa).

9 C2H2-type zinc fingers span residues 6 to 28 (FTCNECGKFFSCTSWLNVHLRSH), 34 to 56 (FTCSECGKFFSCMSRLKVHFRGH), 62 to 84 (SACTECEKCFSSISQRNIHIRSH), 90 to 112 (YTCTVCGKIFTRISQFNVHVRSH), 118 to 140 (FKCTECGKSFICNSQLNLHLRFH), 146 to 168 (TTCSECGKCFTHTSHLNVHFRVH), 174 to 196 (FTCTECGKCLTRQYQLTEHSYLH), 202 to 224 (YTCTECGKCFTRRYHLTEHSYLH), and 230 to 252 (FTCTECGKGFTRRSHLKAHSHTH).

The protein belongs to the krueppel C2H2-type zinc-finger protein family.

The protein resides in the nucleus. In terms of biological role, may be involved in transcriptional regulation. In Xenopus laevis (African clawed frog), this protein is Gastrula zinc finger protein XlCGF28.1.